The chain runs to 643 residues: Asparagine synthetase domain-containing protein 1 (643 aa).

Cys2 (for GATase activity) is an active-site residue. The region spanning 2-184 (CGICCSVNFS…ASGLFRIDLK (183 aa)) is the Glutamine amidotransferase type-2 domain. The 317-residue stretch at 285 to 601 (QFIDVLSVAV…GLTASALLPK (317 aa)) folds into the Asparagine synthetase domain.

This chain is Asparagine synthetase domain-containing protein 1 (ASNSD1), found in Homo sapiens (Human).